The primary structure comprises 319 residues: MTLLAWCVAWILDVVIGDPPHWPHPVRWIGRLIAVSQRVVRRICHSDRALRIGGGVMWLVVIGLTWGVAWGVLALAHGIHPWLGWLVEVWMIFTALAGRCLAQSAMAVARPLQAGDLAESRHKLSWIVGRDTSQLQPAQINRAVVETVAENTVDGIIAPLFFLLLGGAPLAMAYKAVNTLDSMVGYKHEKYRAIGMVSARLDDVANFLPARLSWLLLSLAAVLCREDGARALRTGWRDRYQHSSPNCAWPEATVAGALGIRLGGPNDYFGQRVEKPWIGDAVRDIAVDDISRTIRLMWVASSLALALFIGVRYWLVGAA.

5 consecutive transmembrane segments (helical) span residues 56–76 (VMWL…LALA), 78–98 (GIHP…ALAG), 153–173 (VDGI…LAMA), 204–224 (VANF…AVLC), and 296–316 (LMWV…YWLV).

Belongs to the CobD/CbiB family.

Its subcellular location is the cell membrane. Its pathway is cofactor biosynthesis; adenosylcobalamin biosynthesis. Converts cobyric acid to cobinamide by the addition of aminopropanol on the F carboxylic group. This Klebsiella pneumoniae subsp. pneumoniae (strain ATCC 700721 / MGH 78578) protein is Cobalamin biosynthesis protein CobD.